The chain runs to 330 residues: Embigin (330 aa).

An N-terminal signal peptide occupies residues 1 to 33; sequence MRSHTGLRALVAPGYPLLLLCLLAATRPDPAEG. At 34–254 the chain is on the extracellular side; sequence DPTDPTFTSL…QLGESEEQNE (221 aa). Ig-like V-type domains lie at 38–161 and 162–256; these read PTFT…IHVP and KAHG…NELV. N-linked (GlcNAc...) asparagine glycans are attached at residues asparagine 55, asparagine 62, asparagine 70, asparagine 101, asparagine 118, asparagine 191, asparagine 198, asparagine 216, and asparagine 221. Disulfide bonds link cysteine 89–cysteine 145 and cysteine 182–cysteine 240. The helical transmembrane segment at 255-283 threads the bilayer; that stretch reads LVVLSFLVPLKPFLAILAEVILLVAIILL. At 284–330 the chain is on the cytoplasmic side; the sequence is CEVYTHKKKNDPDAGKEFEQIEQLKSDDSNGIENNVPRYRKTDSADQ. Basic and acidic residues predominate over residues 293–311; that stretch reads NDPDAGKEFEQIEQLKSDD. The segment at 293 to 330 is disordered; the sequence is NDPDAGKEFEQIEQLKSDDSNGIENNVPRYRKTDSADQ. Residue serine 312 is modified to Phosphoserine.

In terms of assembly, interacts with SLC16A1, SLC16A6 and SLC16A7. In terms of tissue distribution, only member of the immunoglobulin superfamily to be expressed in embryonal carcinoma cells, which resemble multipotential cells of early embryos.

It localises to the cell membrane. Its subcellular location is the synapse. Plays a role in targeting the monocarboxylate transporters SLC16A1, SLC16A6 and SLC16A7 to the cell membrane. Plays a role in the outgrowth of motoneurons and in the formation of neuromuscular junctions. Following muscle denervation, promotes nerve terminal sprouting and the formation of additional acetylcholine receptor clusters at synaptic sites without affecting terminal Schwann cell number or morphology. Delays the retraction of terminal sprouts following re-innervation of denervated endplates. In Mus musculus (Mouse), this protein is Embigin (Emb).